A 206-amino-acid polypeptide reads, in one-letter code: Protease (206 aa).

Catalysis depends on residues His54, Asp71, and Cys122.

The protein belongs to the peptidase C5 family. As to quaternary structure, interacts with protease cofactor pVI-C; this interaction is necessary for protease activation.

It is found in the virion. Its subcellular location is the host nucleus. The enzyme catalyses Cleaves proteins of the adenovirus and its host cell at two consensus sites: -Yaa-Xaa-Gly-Gly-|-Xaa- and -Yaa-Xaa-Gly-Xaa-|-Gly- (in which Yaa is Met, Ile or Leu, and Xaa is any amino acid).. Its activity is regulated as follows. Requires DNA and protease cofactor for maximal activation. Inside nascent virions, becomes partially activated by binding to the viral DNA, allowing it to cleave the cofactor that binds to the protease and fully activates it. Actin, like the viral protease cofactor, seems to act as a cofactor in the cleavage of cytokeratin 18 and of actin itself. Cleaves viral precursor proteins (pTP, pIIIa, pVI, pVII, pVIII, and pX) inside newly assembled particles giving rise to mature virions. Protease complexed to its cofactor slides along the viral DNA to specifically locate and cleave the viral precursors. Mature virions have a weakened organization compared to the unmature virions, thereby facilitating subsequent uncoating. Without maturation, the particle lacks infectivity and is unable to uncoat. Late in adenovirus infection, in the cytoplasm, may participate in the cytoskeleton destruction. Cleaves host cell cytoskeletal keratins K7 and K18. This Homo sapiens (Human) protein is Protease.